The sequence spans 362 residues: Methylthioribose-1-phosphate isomerase (362 aa).

Asp-252 functions as the Proton donor in the catalytic mechanism.

Belongs to the eIF-2B alpha/beta/delta subunits family. MtnA subfamily.

It localises to the cytoplasm. The protein localises to the nucleus. It carries out the reaction 5-(methylsulfanyl)-alpha-D-ribose 1-phosphate = 5-(methylsulfanyl)-D-ribulose 1-phosphate. It participates in amino-acid biosynthesis; L-methionine biosynthesis via salvage pathway; L-methionine from S-methyl-5-thio-alpha-D-ribose 1-phosphate: step 1/6. In terms of biological role, catalyzes the interconversion of methylthioribose-1-phosphate (MTR-1-P) into methylthioribulose-1-phosphate (MTRu-1-P). This chain is Methylthioribose-1-phosphate isomerase, found in Drosophila pseudoobscura pseudoobscura (Fruit fly).